Reading from the N-terminus, the 320-residue chain is GTP 3',8-cyclase (320 aa).

One can recognise a Radical SAM core domain in the interval 5-222; that stretch reads KLSRPLKVLR…LMKKEFTFYP (218 aa). R14 lines the GTP pocket. The [4Fe-4S] cluster site is built by C21, C25, and C28. R65 lines the GTP pocket. S-adenosyl-L-methionine is bound at residue G69. Position 96 (T96) interacts with GTP. S120 is a binding site for S-adenosyl-L-methionine. Residue K157 participates in GTP binding. Residue M191 coordinates S-adenosyl-L-methionine. The [4Fe-4S] cluster site is built by C253 and C256. Residue 258-260 coordinates GTP; the sequence is RIR. C270 is a binding site for [4Fe-4S] cluster.

This sequence belongs to the radical SAM superfamily. MoaA family. In terms of assembly, monomer and homodimer. [4Fe-4S] cluster serves as cofactor.

It carries out the reaction GTP + AH2 + S-adenosyl-L-methionine = (8S)-3',8-cyclo-7,8-dihydroguanosine 5'-triphosphate + 5'-deoxyadenosine + L-methionine + A + H(+). It functions in the pathway cofactor biosynthesis; molybdopterin biosynthesis. In terms of biological role, catalyzes the cyclization of GTP to (8S)-3',8-cyclo-7,8-dihydroguanosine 5'-triphosphate. This chain is GTP 3',8-cyclase, found in Aquifex aeolicus (strain VF5).